A 317-amino-acid chain; its full sequence is Acetyl-coenzyme A carboxylase carboxyl transferase subunit alpha (317 aa).

Residues 33–294 (NLDDEIARLQ…KQRLLDDLKE (262 aa)) enclose the CoA carboxyltransferase C-terminal domain.

It belongs to the AccA family. As to quaternary structure, acetyl-CoA carboxylase is a heterohexamer composed of biotin carboxyl carrier protein (AccB), biotin carboxylase (AccC) and two subunits each of ACCase subunit alpha (AccA) and ACCase subunit beta (AccD).

It localises to the cytoplasm. The catalysed reaction is N(6)-carboxybiotinyl-L-lysyl-[protein] + acetyl-CoA = N(6)-biotinyl-L-lysyl-[protein] + malonyl-CoA. Its pathway is lipid metabolism; malonyl-CoA biosynthesis; malonyl-CoA from acetyl-CoA: step 1/1. Functionally, component of the acetyl coenzyme A carboxylase (ACC) complex. First, biotin carboxylase catalyzes the carboxylation of biotin on its carrier protein (BCCP) and then the CO(2) group is transferred by the carboxyltransferase to acetyl-CoA to form malonyl-CoA. The sequence is that of Acetyl-coenzyme A carboxylase carboxyl transferase subunit alpha from Pasteurella multocida (strain Pm70).